Consider the following 467-residue polypeptide: MSLHLYNTLHRRVEPFEPLDPACPTMYVCGPTVYNYVHIGNARGPVVFGVLAALLRRRYGALRYARNITDVDDKINTAAQEQGVPISAITERFCAAYREDMKKLGVEPPDIEPEATAHMPQIIAMIEQLIERQHAYVAMEHVLFAVNSFADYGQLSRRDPEEMLAGARVEIAPYKRDPSDFVLWKPSSDQLPGWDSPWGRGRPGWHIECSAMAAAHLGETIDIHAGGIDLQFPHHENEIAQSRCAHGSSTFARVWMHNGMLNFEGAKMSKSLGNIETVHGLVAKHPPEALRYALLSAHYRKPLDWSEALIAQSVRTLNRLYGTLRDLAAYPAHPFIPGNIEAALDDDLNTPQALAELATLANEARIQLADTTHHAAAEVTAALTRLKAELLGAGLALGLLQQTPEAWFSQGTNESDETHIQALIDARGAAKQARDFVRADAIRAQLAAEGIVLEDTPHGVRWMKQHT.

Residue Cys29 coordinates Zn(2+). A 'HIGH' region motif is present at residues 31–41 (PTVYNYVHIGN). Zn(2+)-binding residues include Cys209, His234, and Glu238. Positions 267–271 (KMSKS) match the 'KMSKS' region motif. Lys270 is a binding site for ATP.

Belongs to the class-I aminoacyl-tRNA synthetase family. In terms of assembly, monomer. Requires Zn(2+) as cofactor.

The protein localises to the cytoplasm. The enzyme catalyses tRNA(Cys) + L-cysteine + ATP = L-cysteinyl-tRNA(Cys) + AMP + diphosphate. The protein is Cysteine--tRNA ligase of Xylella fastidiosa (strain 9a5c).